A 560-amino-acid chain; its full sequence is DNA ligase B (560 aa).

Residue lysine 124 is the N6-AMP-lysine intermediate of the active site.

It belongs to the NAD-dependent DNA ligase family. LigB subfamily.

The catalysed reaction is NAD(+) + (deoxyribonucleotide)n-3'-hydroxyl + 5'-phospho-(deoxyribonucleotide)m = (deoxyribonucleotide)n+m + AMP + beta-nicotinamide D-nucleotide.. Functionally, catalyzes the formation of phosphodiester linkages between 5'-phosphoryl and 3'-hydroxyl groups in double-stranded DNA using NAD as a coenzyme and as the energy source for the reaction. In Escherichia coli O7:K1 (strain IAI39 / ExPEC), this protein is DNA ligase B.